We begin with the raw amino-acid sequence, 178 residues long: Deoxycytidylate deaminase (178 aa).

The CMP/dCMP-type deaminase domain occupies 14–145 (EWPEYFMAVA…EETTAARLLF (132 aa)). Residue His-84 participates in Zn(2+) binding. Residue Glu-86 is the Proton donor of the active site. The Zn(2+) site is built by Cys-110 and Cys-113. Ser-174 is subject to Phosphoserine.

This sequence belongs to the cytidine and deoxycytidylate deaminase family. In terms of assembly, homohexamer. It depends on Zn(2+) as a cofactor.

It catalyses the reaction dCMP + H2O + H(+) = dUMP + NH4(+). The enzyme catalyses 5-hydroxymethyl-dCMP + H2O + H(+) = 5-hydroxymethyl-dUMP + NH4(+). Allosteric enzyme whose activity is greatly influenced by the end products of its metabolic pathway, dCTP and dTTP. Its function is as follows. Catalyzes the deamination of dCMP to dUMP, providing the nucleoside monophosphate substrate for the thymidylate synthase/TYMS. Also, part of a nucleotide salvage pathway that eliminates epigenetically modified 5-hydroxymethyl-dCMP (hmdCMP) in a two-step process entailing deamination to cytotoxic 5-hydroxymethyl-dUMP (hmdUMP), followed by its hydrolysis into 5-hydroxymethyluracil (hmU) and 2-deoxy-D-ribose 5-phosphate (deoxyribosephosphate). Catalyzes the first step in that pathway, the deamination of 5-hydroxymethyl-dCMP (hmdCMP). The protein is Deoxycytidylate deaminase of Mus musculus (Mouse).